The chain runs to 1256 residues: MVRLREIPRTATFAWSPGPTQPLIATGTKAGAVDADFSNDTQLELWELKLDDAEQGVELQPVATVSVDSRFNDIAWSQPSEQHPRGIIAGALDSGALVLWDAEKLRTGASDAQIDQIDKHTGPIQAIQFNPFRPNILASAGAKGELFVHDLDDESKSFRLGKAGANPDEYTTLDWNKKVAHILATGSSGGFVTVWDVKGKKENLTLNHFGRKTVSAVSWDPDVPTRLVTAIPTDQNPLVLAHDQGVLSLSWCPQDSDILLSCGKDNRTIAWNPHSGEQLGRISGRDKLDLPDQIQPVEPEPYSRPASFDGKIAVQTLQNTGANADQSKTAKQAPEGEDFFAQTHAEPQGASFSLKSPPKWLKRRAGVAFGFGGKLVRFGVVDAKSKITISTFAVDSDISQASEDFDKALETGDLTSILESKISKAATDEEKADWTVIETLTSDNPRTKLVEYLGFADQSEEAPAEVKKEAQTNGDADEGSSFFDNATDEGNFLSDLAARKGAKTNNPFQVYTGSESEADTKITRALMLGNFDAALDVCLKENRLSDAFMIAICGGEKCVAKAQAAYFKRQSDAPNYLRLLASVVGKNLWDFVYNADLKDWKEVMATICTFADQAEFPDLCEALGDRLEEAIAEGTTSYRKDASFCYLAGSKLEKVVVNWAQELQENENAGLEQSETDNSFSIHARSLQDFIEKVTVFRKVTQFKDTEQSKENDWKLEPLYAKYVEYADIASAHGQLAIAEKYLDLLPQKYPAADVARNRVKQATRKGAAPAAAGQRQSQPAAAQRGQRVVPAYGAPAPQPTPAQRTASPYAPANPLAPAQTNSPYAPVNPLSQQAQQATQQPPARAGGAYTPAGYQPAPVQQGYGGYGQQQQAPLAPPPQNFSNPNGPSIVPAANRGHIPAWNDTPDFGPPKTASRRGTPLNAVASPFPNQQQNYGPPGGASPGFPPQSRPTPPPPPKGPPQGPPRMTSPPSQAGGAPPNAPNPYAPSPAANNYAPPPSGFAPPQQAPVQRGASPYQPPQSAAPPSNRYAPAPGSQPSAPSGMGGMPPPRNIAPPPGQFTPGASAYAPSPYAQSPAQQAPAAVAPPPRGPPQGPPRAGPPPGGPPQGGPPRPESRPGTGQSQPAAPAAARYPPGDREHIPMVSRPIYEILGAEIQRVKAKAPAQYKAHVTDTEKRLNILFDHLNNEDLLKPDTIQQMNELASNIQAKQFDEAIAIFQDLMTNKNDEGSNWLVSDVITFDADVGVKRLIQFSKSTPA.

WD repeat units lie at residues 7–47, 66–110, 119–159, 165–205, 209–241, and 242–281; these read IPRT…ELWE, SVDS…TGAS, KHTG…KSFR, ANPD…ENLT, FGRK…LVLA, and HDQG…QLGR. A WD 7; interaction with SEC13 repeat occupies 368–390; that stretch reads AFGFGGKLVRFGVVDAKSKITIS. 2 disordered regions span residues 460–481 and 761–1139; these read EEAP…EGSS and KQAT…REHI. Composition is skewed to low complexity over residues 765 to 809 and 833 to 862; these read RKGA…TASP and QQAQ…PVQQ. Over residues 944–968 the composition is skewed to pro residues; that stretch reads GFPPQSRPTPPPPPKGPPQGPPRMT. Composition is skewed to low complexity over residues 969–978 and 1023–1041; these read SPPSQAGGAP and APPS…SAPS. Positions 1046–1058 are enriched in pro residues; sequence MPPPRNIAPPPGQ. Residues 1061-1082 are compositionally biased toward low complexity; the sequence is PGASAYAPSPYAQSPAQQAPAA. A compositionally biased stretch (pro residues) spans 1083–1111; it reads VAPPPRGPPQGPPRAGPPPGGPPQGGPPR. The span at 1123–1132 shows a compositional bias: low complexity; sequence PAAPAAARYP.

The protein belongs to the WD repeat SEC31 family. As to quaternary structure, the COPII coat is composed of at least 5 proteins: the SEC23/24 complex, the SEC13/31 complex, and the protein SAR1. SEC13 and SEC31 make a 2:2 tetramer that forms the edge element of the COPII outer coat. The tetramer self-assembles in multiple copies to form the complete polyhedral cage. Interacts (via WD 7) with SEC13.

Its subcellular location is the cytoplasmic vesicle. The protein resides in the COPII-coated vesicle membrane. The protein localises to the endoplasmic reticulum membrane. Its function is as follows. Component of the coat protein complex II (COPII) which promotes the formation of transport vesicles from the endoplasmic reticulum (ER). The coat has two main functions, the physical deformation of the endoplasmic reticulum membrane into vesicles and the selection of cargo molecules. This chain is Protein transport protein SEC31 (SEC31), found in Phaeosphaeria nodorum (strain SN15 / ATCC MYA-4574 / FGSC 10173) (Glume blotch fungus).